The following is a 182-amino-acid chain: Adenylate kinase (182 aa).

12–17 (GAGKGT) provides a ligand contact to ATP. The NMP stretch occupies residues 32 to 61 (STGDLLRTEVGAKTPLGQEAAAVMNRGELV). AMP-binding positions include Thr33, Arg38, 59 to 61 (ELV), 85 to 88 (GFPR), and Gln92. An LID region spans residues 126 to 132 (SRGRSDD). Arg127 contacts ATP. AMP-binding residues include Arg129 and Arg140. Gly168 contributes to the ATP binding site.

This sequence belongs to the adenylate kinase family. As to quaternary structure, monomer.

It is found in the cytoplasm. It carries out the reaction AMP + ATP = 2 ADP. It functions in the pathway purine metabolism; AMP biosynthesis via salvage pathway; AMP from ADP: step 1/1. Catalyzes the reversible transfer of the terminal phosphate group between ATP and AMP. Plays an important role in cellular energy homeostasis and in adenine nucleotide metabolism. This is Adenylate kinase from Prochlorococcus marinus (strain MIT 9313).